The primary structure comprises 425 residues: Inositol hexakisphosphate kinase 2 (425 aa).

ATP-binding positions include 206 to 208 and Asp-219; that span reads ENL. Residues 215–223, Lys-221, and 235–242 contribute to the substrate site; these read PCVLDLKMG and KAANQIRK. Asp-382 lines the ATP pocket. Residue His-385 coordinates substrate.

This sequence belongs to the inositol phosphokinase (IPK) family. As to expression, detected in kidney, intestine, liver and heart.

It localises to the nucleus. The catalysed reaction is 1D-myo-inositol hexakisphosphate + ATP = 5-diphospho-1D-myo-inositol 1,2,3,4,6-pentakisphosphate + ADP. The protein operates within phospholipid metabolism; phosphatidylinositol metabolism. Functionally, converts inositol hexakisphosphate (InsP6) to diphosphoinositol pentakisphosphate (InsP7/PP-InsP5). In Oryctolagus cuniculus (Rabbit), this protein is Inositol hexakisphosphate kinase 2 (IP6K2).